A 426-amino-acid polypeptide reads, in one-letter code: Serine--tRNA ligase (426 aa).

231-233 contributes to the L-serine binding site; the sequence is TAE. 262-264 lines the ATP pocket; that stretch reads RAE. Glu-285 lines the L-serine pocket. Position 349-352 (349-352) interacts with ATP; that stretch reads EISS. Ser-385 provides a ligand contact to L-serine.

This sequence belongs to the class-II aminoacyl-tRNA synthetase family. Type-1 seryl-tRNA synthetase subfamily. As to quaternary structure, homodimer. The tRNA molecule binds across the dimer.

Its subcellular location is the cytoplasm. The catalysed reaction is tRNA(Ser) + L-serine + ATP = L-seryl-tRNA(Ser) + AMP + diphosphate + H(+). It carries out the reaction tRNA(Sec) + L-serine + ATP = L-seryl-tRNA(Sec) + AMP + diphosphate + H(+). Its pathway is aminoacyl-tRNA biosynthesis; selenocysteinyl-tRNA(Sec) biosynthesis; L-seryl-tRNA(Sec) from L-serine and tRNA(Sec): step 1/1. Functionally, catalyzes the attachment of serine to tRNA(Ser). Is also able to aminoacylate tRNA(Sec) with serine, to form the misacylated tRNA L-seryl-tRNA(Sec), which will be further converted into selenocysteinyl-tRNA(Sec). The protein is Serine--tRNA ligase of Myxococcus xanthus (strain DK1622).